Here is a 152-residue protein sequence, read N- to C-terminus: MFDVAPSELLLVAVVALVVIGPKDLPRAMRVVGRWLGKARKLSRHFRSGIDEMIRQSEMEDMEKRWAEENAKLLAENQGQGNQTASTSSPATPSPVSDDPAEQNIVFTSPADLEVNTADTSHLAANHTETTATTAASTPAKPKEADQQEKQS.

A helical membrane pass occupies residues M1–G21. The segment covering E60–A71 has biased composition (basic and acidic residues). The segment at E60–S152 is disordered. Composition is skewed to low complexity over residues T84–D98 and A124–A140. The segment covering K141–S152 has biased composition (basic and acidic residues).

The protein belongs to the TatB family. The Tat system comprises two distinct complexes: a TatABC complex, containing multiple copies of TatA, TatB and TatC subunits, and a separate TatA complex, containing only TatA subunits. Substrates initially bind to the TatABC complex, which probably triggers association of the separate TatA complex to form the active translocon.

The protein localises to the cell inner membrane. In terms of biological role, part of the twin-arginine translocation (Tat) system that transports large folded proteins containing a characteristic twin-arginine motif in their signal peptide across membranes. Together with TatC, TatB is part of a receptor directly interacting with Tat signal peptides. TatB may form an oligomeric binding site that transiently accommodates folded Tat precursor proteins before their translocation. This Zymomonas mobilis subsp. mobilis (strain ATCC 31821 / ZM4 / CP4) protein is Sec-independent protein translocase protein TatB.